The chain runs to 2193 residues: Genome polyprotein (2193 aa).

Positions 1-22 (MGSQVSTQRSGSHENSNSATEG) are disordered. Residue glycine 2 is the site of N-myristoyl glycine; by host attachment. At 2–1503 (GSQVSTQRSG…HLNRAVLVMQ (1502 aa)) the chain is on the cytoplasmic side. Residues 568–588 (RVADVIESSIGDSVSRALTQA) form an amphipathic alpha-helix region. Active-site for protease 2A activity residues include histidine 883 and aspartate 901. Zn(2+) contacts are provided by cysteine 918 and cysteine 920. Cysteine 972 functions as the For protease 2A activity in the catalytic mechanism. Residues cysteine 978 and histidine 980 each contribute to the Zn(2+) site. Residues 1216–1374 (EKRMNNYMQF…SKTDLGRLDA (159 aa)) form the SF3 helicase domain. ATP is bound at residue 1240 to 1247 (GSPGTGKS). Positions 1381, 1392, and 1397 each coordinate Zn(2+). The segment at 1381-1397 (CSENNTANFKRCSPLVC) adopts a C4-type; degenerate zinc-finger fold. Residues 1504-1519 (SIATVVAVVSLVYVIY) lie within the membrane without spanning it. Residues 1520-2193 (KLFAGFQGAY…NLRRNWLELF (674 aa)) lie on the Cytoplasmic side of the membrane. Residue tyrosine 1529 is modified to O-(5'-phospho-RNA)-tyrosine. Residues 1549-1727 (GPSLDFALSL…FCAGLKRSYF (179 aa)) form the Peptidase C3 domain. Residues histidine 1588, glutamate 1619, and cysteine 1695 each act as for protease 3C activity in the active site. A RdRp catalytic domain is found at 1958-2073 (GSLFAFDYSG…ASYPFPIDCL (116 aa)). Mg(2+) contacts are provided by aspartate 1964 and aspartate 2060.

The protein belongs to the picornaviruses polyprotein family. As to quaternary structure, interacts with capsid protein VP1 and capsid protein VP3 to form heterotrimeric protomers. Interacts with capsid protein VP0, and capsid protein VP3 to form heterotrimeric protomers. Five protomers subsequently associate to form pentamers which serve as building blocks for the capsid. Interacts with capsid protein VP2, capsid protein VP3 and capsid protein VP4 following cleavage of capsid protein VP0. Interacts with host SCARB2. Interacts with host ARF6; this interaction mediates viral endocytosis. In terms of assembly, interacts with capsid protein VP1 and capsid protein VP3 in the mature capsid. Interacts with host SCARB2. As to quaternary structure, interacts with capsid protein VP0 and capsid protein VP1 to form heterotrimeric protomers. Five protomers subsequently associate to form pentamers which serve as building blocks for the capsid. Interacts with capsid protein VP4 in the mature capsid. Interacts with protein 2C; this interaction may be important for virion morphogenesis. Interacts with capsid protein VP1 and capsid protein VP3. In terms of assembly, homodimer. As to quaternary structure, interacts with host BAX; this interaction activates the mitochondrial apoptotic pathway. Interacts with host ILF2. Homohexamer; forms a hexameric ring structure with 6-fold symmetry characteristic of AAA+ ATPases. Interacts (via N-terminus) with host RTN3 (via reticulon domain); this interaction is important for viral replication. Interacts with capsid protein VP3; this interaction may be important for virion morphogenesis. In terms of assembly, interacts with protein 3CD. As to quaternary structure, homodimer. Interacts with host GBF1. Interacts (via GOLD domain) with host ACBD3 (via GOLD domain); this interaction allows the formation of a viral protein 3A/ACBD3 heterotetramer with a 2:2 stoichiometry, which will stimulate the recruitment of host PI4KB in order to synthesize PI4P at the viral RNA replication sites. Interacts with RNA-directed RNA polymerase. In terms of assembly, interacts with host IFIH1/MDA5; this interaction inhibits host IFIH1. As to quaternary structure, interacts with protein 3AB and with RNA-directed RNA polymerase. Interacts with Viral protein genome-linked and with protein 3CD. The cofactor is Mg(2+). Post-translationally, specific enzymatic cleavages in vivo by the viral proteases yield processing intermediates and the mature proteins. In terms of processing, myristoylation is required for the formation of pentamers during virus assembly. Further assembly of 12 pentamers and a molecule of genomic RNA generates the provirion. During virion maturation, immature virions are rendered infectious following cleavage of VP0 into VP4 and VP2. This maturation seems to be an autocatalytic event triggered by the presence of RNA in the capsid and it is followed by a conformational change infectious virion. Post-translationally, myristoylation is required during RNA encapsidation and formation of the mature virus particle. In terms of processing, VPg is uridylylated by the polymerase into VPg-pUpU. This acts as a nucleotide-peptide primer for the genomic RNA replication.

It is found in the virion. It localises to the host cytoplasm. The protein resides in the host cytoplasmic vesicle membrane. The protein localises to the host nucleus. It carries out the reaction a ribonucleoside 5'-triphosphate + H2O = a ribonucleoside 5'-diphosphate + phosphate + H(+). It catalyses the reaction Selective cleavage of Tyr-|-Gly bond in the picornavirus polyprotein.. The enzyme catalyses RNA(n) + a ribonucleoside 5'-triphosphate = RNA(n+1) + diphosphate. The catalysed reaction is Selective cleavage of Gln-|-Gly bond in the poliovirus polyprotein. In other picornavirus reactions Glu may be substituted for Gln, and Ser or Thr for Gly.. Its activity is regulated as follows. Replication or transcription is subject to high level of random mutations by the nucleotide analog ribavirin. In terms of biological role, forms an icosahedral capsid of pseudo T=3 symmetry with capsid proteins VP2 and VP3. The capsid is 300 Angstroms in diameter, composed of 60 copies of each capsid protein and enclosing the viral positive strand RNA genome. Capsid protein VP1 mainly forms the vertices of the capsid. Capsid protein VP1, together with VP2, interacts with host cell receptor SCARB2 to provide virion attachment to target host cells. This attachment induces virion internalization. After binding to its receptor, the capsid undergoes conformational changes. Capsid protein VP1 N-terminus (that contains an amphipathic alpha-helix) and capsid protein VP4 are externalized. Together, they shape a pore in the host membrane through which viral genome is translocated to host cell cytoplasm. Functionally, forms an icosahedral capsid of pseudo T=3 symmetry with capsid proteins VP2 and VP3. The capsid is 300 Angstroms in diameter, composed of 60 copies of each capsid protein and enclosing the viral positive strand RNA genome. Capsid protein VP2, together with VP1, interacts with host cell receptor SCARB2 to provide virion attachment to target host cells. Its function is as follows. Forms an icosahedral capsid of pseudo T=3 symmetry with capsid proteins VP2 and VP3. The capsid is 300 Angstroms in diameter, composed of 60 copies of each capsid protein and enclosing the viral positive strand RNA genome. Lies on the inner surface of the capsid shell. After binding to the host receptor, the capsid undergoes conformational changes. Capsid protein VP4 is released, Capsid protein VP1 N-terminus is externalized, and together, they shape a pore in the host membrane through which the viral genome is translocated into the host cell cytoplasm. In terms of biological role, component of immature procapsids, which is cleaved into capsid proteins VP4 and VP2 after maturation. Allows the capsid to remain inactive before the maturation step. Functionally, cysteine protease that cleaves viral polyprotein and specific host proteins. It is responsible for the autocatalytic cleavage between the P1 and P2 regions, which is the first cleavage occurring in the polyprotein. Also cleaves the host translation initiation factor EIF4G1, in order to shut down the capped cellular mRNA translation. Inhibits the host nucleus-cytoplasm protein and RNA trafficking by cleaving host members of the nuclear pores. Counteracts stress granule formation probably by antagonizing its assembly or promoting its dissassembly. Cleaves and inhibits host IFIH1/MDA5, thereby inhibiting the type-I IFN production and the establishment of the antiviral state. Cleaves and inhibits host MAVS, thereby inhibiting the type-I IFN production and the establishment of the antiviral state. Its function is as follows. Plays an essential role in the virus replication cycle by acting as a viroporin. Creates a pore in the host endoplasmic reticulum and as a consequence releases Ca2+ in the cytoplasm of infected cell. In turn, high levels of cytoplasmic calcium may trigger membrane trafficking and transport of viral ER-associated proteins to viroplasms, sites of viral genome replication. Induces and associates with structural rearrangements of intracellular membranes. Displays RNA-binding, nucleotide binding and NTPase activities. May play a role in virion morphogenesis and viral RNA encapsidation by interacting with the capsid protein VP3. In terms of biological role, localizes the viral replication complex to the surface of membranous vesicles. Together with protein 3CD binds the Cis-Active RNA Element (CRE) which is involved in RNA synthesis initiation. Acts as a cofactor to stimulate the activity of 3D polymerase, maybe through a nucleid acid chaperone activity. Functionally, localizes the viral replication complex to the surface of membranous vesicles. It inhibits host cell endoplasmic reticulum-to-Golgi apparatus transport and causes the disassembly of the Golgi complex, possibly through GBF1 interaction. This would result in depletion of MHC, trail receptors and IFN receptors at the host cell surface. Plays an essential role in viral RNA replication by recruiting ACBD3 and PI4KB at the viral replication sites, thereby allowing the formation of the rearranged membranous structures where viral replication takes place. Its function is as follows. Acts as a primer for viral RNA replication and remains covalently bound to viral genomic RNA. VPg is uridylylated prior to priming replication into VPg-pUpU. The oriI viral genomic sequence may act as a template for this. The VPg-pUpU is then used as primer on the genomic RNA poly(A) by the RNA-dependent RNA polymerase to replicate the viral genome. During genome replication, the VPg-RNA linkage is removed by the host TDP2, thereby accelerating replication. During the late stage of the replication cycle, host TDP2 is excluded from sites of viral RNA synthesis and encapsidation, allowing for the generation of progeny virions. Involved in the viral replication complex and viral polypeptide maturation. It exhibits protease activity with a specificity and catalytic efficiency that is different from protease 3C. Protein 3CD lacks polymerase activity. Protein 3CD binds to the 5'UTR of the viral genome. In terms of biological role, major viral protease that mediates proteolytic processing of the polyprotein. Cleaves host EIF5B, contributing to host translation shutoff. Also cleaves host PABPC1, contributing to host translation shutoff. Disassembles host cytoplasmic stress granules by cleaving host G3BP1, although this effect is less prononced than the inhibition induced by protease 2A. Cleaves host RIGI and thus contributes to the inhibition of type I interferon production. Cleaves host IRF7 and thus contributes to the inhibition of type I interferon production. Cleaves host HNRNPA1 thereby increasing the translation of apoptosis protease activating factor APAF1, leading to apoptosis of the host cell. Cleaves host NLRP1, triggers host N-glycine-mediated degradation of the autoinhibitory NLRP1 N-terminal fragment. Functionally, replicates the viral genomic RNA on the surface of intracellular membranes. May form linear arrays of subunits that propagate along a strong head-to-tail interaction called interface-I. Covalently attaches UMP to a tyrosine of VPg, which is used to prime RNA synthesis. The positive stranded RNA genome is first replicated at virus induced membranous vesicles, creating a dsRNA genomic replication form. This dsRNA is then used as template to synthesize positive stranded RNA genomes. ss(+)RNA genomes are either translated, replicated or encapsidated. This is Genome polyprotein from Human enterovirus 71 (strain 7423/MS/87) (EV71).